Here is a 288-residue protein sequence, read N- to C-terminus: Oxaloacetate decarboxylase (288 aa).

Residue serine 47 participates in substrate binding. Aspartate 85 serves as a coordination point for Mg(2+). Residues arginine 156 and histidine 232 each coordinate substrate.

Belongs to the isocitrate lyase/PEP mutase superfamily. Oxaloacetate decarboxylase family. Homotetramer; dimer of dimers. Mg(2+) is required as a cofactor.

It carries out the reaction oxaloacetate + H(+) = pyruvate + CO2. Functionally, catalyzes the decarboxylation of oxaloacetate into pyruvate. Seems to play a role in maintaining cellular concentrations of bicarbonate and pyruvate. This is Oxaloacetate decarboxylase from Bradyrhizobium sp. (strain BTAi1 / ATCC BAA-1182).